The primary structure comprises 281 residues: MEMO1 family protein APE_1771 (281 aa).

Belongs to the MEMO1 family.

The polypeptide is MEMO1 family protein APE_1771 (Aeropyrum pernix (strain ATCC 700893 / DSM 11879 / JCM 9820 / NBRC 100138 / K1)).